A 430-amino-acid chain; its full sequence is Enolase (430 aa).

A (2R)-2-phosphoglycerate-binding site is contributed by Gln-167. The active-site Proton donor is Glu-209. Residues Asp-246, Glu-289, and Asp-316 each coordinate Mg(2+). 4 residues coordinate (2R)-2-phosphoglycerate: Lys-341, Arg-370, Ser-371, and Lys-392. Lys-341 serves as the catalytic Proton acceptor.

It belongs to the enolase family. Component of the RNA degradosome, a multiprotein complex involved in RNA processing and mRNA degradation. Mg(2+) is required as a cofactor.

The protein resides in the cytoplasm. It localises to the secreted. The protein localises to the cell surface. It carries out the reaction (2R)-2-phosphoglycerate = phosphoenolpyruvate + H2O. The protein operates within carbohydrate degradation; glycolysis; pyruvate from D-glyceraldehyde 3-phosphate: step 4/5. Catalyzes the reversible conversion of 2-phosphoglycerate (2-PG) into phosphoenolpyruvate (PEP). It is essential for the degradation of carbohydrates via glycolysis. The protein is Enolase of Idiomarina loihiensis (strain ATCC BAA-735 / DSM 15497 / L2-TR).